The primary structure comprises 151 residues: uncharacterized protein (151 aa).

[4Fe-4S] cluster contacts are provided by Cys24, Cys27, Cys92, and Cys129.

The protein belongs to the complex I 20 kDa subunit family. [4Fe-4S] cluster is required as a cofactor.

This is an uncharacterized protein from Methanocaldococcus jannaschii (strain ATCC 43067 / DSM 2661 / JAL-1 / JCM 10045 / NBRC 100440) (Methanococcus jannaschii).